The chain runs to 264 residues: Tryptophan synthase alpha chain (264 aa).

Active-site proton acceptor residues include E45 and D56.

This sequence belongs to the TrpA family. In terms of assembly, tetramer of two alpha and two beta chains.

It carries out the reaction (1S,2R)-1-C-(indol-3-yl)glycerol 3-phosphate + L-serine = D-glyceraldehyde 3-phosphate + L-tryptophan + H2O. It functions in the pathway amino-acid biosynthesis; L-tryptophan biosynthesis; L-tryptophan from chorismate: step 5/5. In terms of biological role, the alpha subunit is responsible for the aldol cleavage of indoleglycerol phosphate to indole and glyceraldehyde 3-phosphate. In Leptospira interrogans serogroup Icterohaemorrhagiae serovar copenhageni (strain Fiocruz L1-130), this protein is Tryptophan synthase alpha chain.